The chain runs to 127 residues: Large ribosomal subunit protein bL19 (127 aa).

Belongs to the bacterial ribosomal protein bL19 family.

This protein is located at the 30S-50S ribosomal subunit interface and may play a role in the structure and function of the aminoacyl-tRNA binding site. The chain is Large ribosomal subunit protein bL19 from Trichodesmium erythraeum (strain IMS101).